Here is a 159-residue protein sequence, read N- to C-terminus: S-ribosylhomocysteine lyase (159 aa).

Fe cation is bound by residues H53, H57, and C124.

It belongs to the LuxS family. In terms of assembly, homodimer. Requires Fe cation as cofactor.

The enzyme catalyses S-(5-deoxy-D-ribos-5-yl)-L-homocysteine = (S)-4,5-dihydroxypentane-2,3-dione + L-homocysteine. Its function is as follows. Involved in the synthesis of autoinducer 2 (AI-2) which is secreted by bacteria and is used to communicate both the cell density and the metabolic potential of the environment. The regulation of gene expression in response to changes in cell density is called quorum sensing. Catalyzes the transformation of S-ribosylhomocysteine (RHC) to homocysteine (HC) and 4,5-dihydroxy-2,3-pentadione (DPD). The protein is S-ribosylhomocysteine lyase of Desulfotalea psychrophila (strain LSv54 / DSM 12343).